Consider the following 908-residue polypeptide: DNA mismatch repair protein MutS (908 aa).

Residue 662–669 (GPNMGGKS) participates in ATP binding.

Belongs to the DNA mismatch repair MutS family.

Its function is as follows. This protein is involved in the repair of mismatches in DNA. It is possible that it carries out the mismatch recognition step. This protein has a weak ATPase activity. This chain is DNA mismatch repair protein MutS, found in Rhizobium johnstonii (strain DSM 114642 / LMG 32736 / 3841) (Rhizobium leguminosarum bv. viciae).